A 658-amino-acid polypeptide reads, in one-letter code: Pentatricopeptide repeat-containing protein 7, mitochondrial (658 aa).

A mitochondrion-targeting transit peptide spans 1-29 (MRNCVSPLLFAWTKHLRLREFKIPFPNRL). PPR repeat units lie at residues 130–164 (VKKR…TPIW) and 220–254 (LYVE…SESL).

It is found in the mitochondrion. Its function is as follows. Mitochondrial RNA-binding protein required for the stability of the atp6 mRNA. This Schizosaccharomyces pombe (strain 972 / ATCC 24843) (Fission yeast) protein is Pentatricopeptide repeat-containing protein 7, mitochondrial (ppr7).